The chain runs to 226 residues: UPF0758 protein Daro_3142 (226 aa).

Residues Ser103–Leu226 form the MPN domain. 3 residues coordinate Zn(2+): His174, His176, and Asp187. The JAMM motif signature appears at His174–Asp187.

Belongs to the UPF0758 family.

In Dechloromonas aromatica (strain RCB), this protein is UPF0758 protein Daro_3142.